Consider the following 537-residue polypeptide: Probable protein kinase UbiB (537 aa).

A helical transmembrane segment spans residues 24–44 (LLFEQPLLPWWLASLRLLMPW). The region spanning 126-494 (RFDVEPLASA…RRRQGDNWAL (369 aa)) is the Protein kinase domain. Residues 132–140 (LASASVAQV) and Lys154 each bind ATP. The active-site Proton acceptor is Asp289. 2 consecutive transmembrane segments (helical) span residues 493–513 (ALRLLGAGLLGGGATLAAGAV) and 515–535 (LSAPAAWPAWLMLAAGLYLIV).

This sequence belongs to the ABC1 family. UbiB subfamily.

The protein resides in the cell inner membrane. Its pathway is cofactor biosynthesis; ubiquinone biosynthesis [regulation]. Is probably a protein kinase regulator of UbiI activity which is involved in aerobic coenzyme Q (ubiquinone) biosynthesis. This is Probable protein kinase UbiB from Pseudomonas entomophila (strain L48).